The sequence spans 662 residues: UvrABC system protein B (662 aa).

Positions 25–414 constitute a Helicase ATP-binding domain; that stretch reads AGLNSKKRSQ…GTVVELIIRP (390 aa). Residue 38–45 participates in ATP binding; the sequence is GITGSGKT. The short motif at 91–114 is the Beta-hairpin element; the sequence is YYDYYQPEAYIVRTDTFIEKDSSI. One can recognise a Helicase C-terminal domain in the interval 430–592; that stretch reads QVEDLISEIQ…IIPKTINSAI (163 aa). A UVR domain is found at 622–657; the sequence is KSYMDKLKKEMFKAASNLEFEQAAKLRNQLKTLEKA.

This sequence belongs to the UvrB family. Forms a heterotetramer with UvrA during the search for lesions. Interacts with UvrC in an incision complex.

It localises to the cytoplasm. In terms of biological role, the UvrABC repair system catalyzes the recognition and processing of DNA lesions. A damage recognition complex composed of 2 UvrA and 2 UvrB subunits scans DNA for abnormalities. Upon binding of the UvrA(2)B(2) complex to a putative damaged site, the DNA wraps around one UvrB monomer. DNA wrap is dependent on ATP binding by UvrB and probably causes local melting of the DNA helix, facilitating insertion of UvrB beta-hairpin between the DNA strands. Then UvrB probes one DNA strand for the presence of a lesion. If a lesion is found the UvrA subunits dissociate and the UvrB-DNA preincision complex is formed. This complex is subsequently bound by UvrC and the second UvrB is released. If no lesion is found, the DNA wraps around the other UvrB subunit that will check the other stand for damage. This Rickettsia typhi (strain ATCC VR-144 / Wilmington) protein is UvrABC system protein B.